Reading from the N-terminus, the 321-residue chain is Transmembrane and ubiquitin-like domain-containing protein 2 (321 aa).

Residues 36–56 form a helical membrane-spanning segment; that stretch reads VMVVAGVVVLILALVLAWLST. Disordered stretches follow at residues 87–131 and 145–170; these read LVAG…GGVE and KRQAGAGSSSPEAPLRSEDSTCLPPS. The segment covering 104–120 has biased composition (basic and acidic residues); sequence EGNDEKAEEAGEGRGDS. A Ubiquitin-like domain is found at 174 to 247; that stretch reads ITVRLKFLND…IHCHRSPPGS (74 aa). The next 2 membrane-spanning stretches (helical) occupy residues 266 to 286 and 295 to 315; these read LGVNVGSLMVPVFVVLLGVVW and FFTAPATVSLVGVTVFFSFLV.

It is found in the membrane. This Homo sapiens (Human) protein is Transmembrane and ubiquitin-like domain-containing protein 2 (TMUB2).